The chain runs to 599 residues: Sulfite reductase [NADPH] flavoprotein alpha-component (599 aa).

A Flavodoxin-like domain is found at 64–202 (ITLISASQTG…AAAEWRARVV (139 aa)). FMN-binding positions include 70–75 (SQTGNA), 117–120 (STQG), and 153–162 (LGDTSYEFFC). An FAD-binding FR-type domain is found at 234–448 (EAPLTATLSV…IEHNDNFRLP (215 aa)). FAD-binding positions include Thr322, Ala356, 386–389 (RLYS), 404–406 (TVG), Tyr410, and 419–422 (GGAS). Residues 519–520 (SR), 525–529 (KIYVQ), and Asp561 each bind NADP(+). Tyr599 is a binding site for FAD.

This sequence belongs to the NADPH-dependent sulphite reductase flavoprotein subunit CysJ family. It in the N-terminal section; belongs to the flavodoxin family. In the C-terminal section; belongs to the flavoprotein pyridine nucleotide cytochrome reductase family. As to quaternary structure, alpha(8)-beta(8). The alpha component is a flavoprotein, the beta component is a hemoprotein. FAD is required as a cofactor. FMN serves as cofactor.

The enzyme catalyses hydrogen sulfide + 3 NADP(+) + 3 H2O = sulfite + 3 NADPH + 4 H(+). The protein operates within sulfur metabolism; hydrogen sulfide biosynthesis; hydrogen sulfide from sulfite (NADPH route): step 1/1. Component of the sulfite reductase complex that catalyzes the 6-electron reduction of sulfite to sulfide. This is one of several activities required for the biosynthesis of L-cysteine from sulfate. The flavoprotein component catalyzes the electron flow from NADPH -&gt; FAD -&gt; FMN to the hemoprotein component. This is Sulfite reductase [NADPH] flavoprotein alpha-component from Klebsiella pneumoniae subsp. pneumoniae (strain ATCC 700721 / MGH 78578).